The primary structure comprises 397 residues: UPF0597 protein Tmel_1007 (397 aa).

Belongs to the UPF0597 family.

In Thermosipho melanesiensis (strain DSM 12029 / CIP 104789 / BI429), this protein is UPF0597 protein Tmel_1007.